The chain runs to 124 residues: Small ribosomal subunit protein uS12 (124 aa).

Residue aspartate 89 is modified to 3-methylthioaspartic acid. Positions 105–124 (QGVKNRKQARSRYGAKKEKS) are disordered. Positions 108-118 (KNRKQARSRYG) are enriched in basic residues.

It belongs to the universal ribosomal protein uS12 family. Part of the 30S ribosomal subunit. Contacts proteins S8 and S17. May interact with IF1 in the 30S initiation complex.

With S4 and S5 plays an important role in translational accuracy. Functionally, interacts with and stabilizes bases of the 16S rRNA that are involved in tRNA selection in the A site and with the mRNA backbone. Located at the interface of the 30S and 50S subunits, it traverses the body of the 30S subunit contacting proteins on the other side and probably holding the rRNA structure together. The combined cluster of proteins S8, S12 and S17 appears to hold together the shoulder and platform of the 30S subunit. In Mycolicibacterium smegmatis (strain ATCC 700084 / mc(2)155) (Mycobacterium smegmatis), this protein is Small ribosomal subunit protein uS12 (rpsL).